We begin with the raw amino-acid sequence, 284 residues long: RNase adapter protein RapZ (284 aa).

8–15 contributes to the ATP binding site; it reads GRSGSGKS. A GTP-binding site is contributed by 56-59; sequence DVRN. The RNA-binding stretch occupies residues 266–284; the sequence is RSRGKNVQSRHRTLEKRKS.

Belongs to the RapZ-like family. RapZ subfamily. In terms of assembly, homotrimer.

Modulates the synthesis of GlmS, by affecting the processing and stability of the regulatory small RNA GlmZ. When glucosamine-6-phosphate (GlcN6P) concentrations are high in the cell, RapZ binds GlmZ and targets it to cleavage by RNase E. Consequently, GlmZ is inactivated and unable to activate GlmS synthesis. Under low GlcN6P concentrations, RapZ is sequestered and inactivated by an other regulatory small RNA, GlmY, preventing GlmZ degradation and leading to synthesis of GlmS. This is RNase adapter protein RapZ from Cronobacter sakazakii (strain ATCC BAA-894) (Enterobacter sakazakii).